The primary structure comprises 457 residues: Phosphoglucosamine mutase (457 aa).

Residue Ser-105 is the Phosphoserine intermediate of the active site. Ser-105, Asp-247, Asp-249, and Asp-251 together coordinate Mg(2+). Residue Ser-105 is modified to Phosphoserine.

It belongs to the phosphohexose mutase family. Mg(2+) is required as a cofactor. Post-translationally, activated by phosphorylation.

The catalysed reaction is alpha-D-glucosamine 1-phosphate = D-glucosamine 6-phosphate. Catalyzes the conversion of glucosamine-6-phosphate to glucosamine-1-phosphate. The polypeptide is Phosphoglucosamine mutase (Protochlamydia amoebophila (strain UWE25)).